We begin with the raw amino-acid sequence, 38 residues long: L-amino-acid oxidase (38 aa).

Belongs to the flavin monoamine oxidase family. FIG1 subfamily. In terms of assembly, homodimer; non-covalently linked. Requires FAD as cofactor. In terms of processing, N-glycosylated. As to expression, expressed by the venom gland.

The protein localises to the secreted. The catalysed reaction is an L-alpha-amino acid + O2 + H2O = a 2-oxocarboxylate + H2O2 + NH4(+). It catalyses the reaction L-leucine + O2 + H2O = 4-methyl-2-oxopentanoate + H2O2 + NH4(+). The enzyme catalyses L-phenylalanine + O2 + H2O = 3-phenylpyruvate + H2O2 + NH4(+). It carries out the reaction L-tryptophan + O2 + H2O = indole-3-pyruvate + H2O2 + NH4(+). The catalysed reaction is L-methionine + O2 + H2O = 4-methylsulfanyl-2-oxobutanoate + H2O2 + NH4(+). It catalyses the reaction L-arginine + O2 + H2O = 5-guanidino-2-oxopentanoate + H2O2 + NH4(+). The enzyme catalyses L-2-aminohexanoate + O2 + H2O = 2-oxohexanoate + H2O2 + NH4(+). It carries out the reaction L-2-aminopentanoate + O2 + H2O = 2-oxopentanoate + H2O2 + NH4(+). The catalysed reaction is L-tyrosine + O2 + H2O = 3-(4-hydroxyphenyl)pyruvate + H2O2 + NH4(+). Catalyzes an oxidative deamination of predominantly hydrophobic and aromatic L-amino acids, thus producing hydrogen peroxide that may contribute to the diverse toxic effects of this enzyme. Is very active against L-Phe and L-Tyr, moderately active against L-Trp, L-Met, L-Leu, L-norleucine (L-2-aminohexanoate), L-Arg and L-norvaline (L-2-aminopentanoate), and slightly active against L-His, L-cystine, and L-Ile. L-Gln, L-Lys, L-Asn, L-ornithine, L-Ala and L-Val are oxidized very slowly. Exhibits diverse biological activities, such as hemorrhage, hemolysis, edema, apoptosis of vascular endothelial cells or tumor cell lines, antibacterial and antiparasitic activities. This protein inhibits both agonist- and shear stress-induced platelet aggregation (SIPA). Effects of snake L-amino oxidases on platelets are controversial, since they either induce aggregation or inhibit agonist-induced aggregation. These different effects are probably due to different experimental conditions. The polypeptide is L-amino-acid oxidase (Naja kaouthia (Monocled cobra)).